Consider the following 448-residue polypeptide: Vicilin Cor a 11.0101 (448 aa).

The segment covering 1–44 (MLPKEDPELKKCKHKCRDERQFDEQQRRDGKQICEEKARERQQE) has biased composition (basic and acidic residues). The segment at 1–66 (MLPKEDPELK…QEENPYVFQD (66 aa)) is disordered. A glycan (N-linked (GlcNAc...) asparagine) is linked at asparagine 47. 2 Cupin type-1 domains span residues 84–220 (ENFT…EQLE) and 263–418 (INLL…REVE). The N-linked (GlcNAc...) asparagine glycan is linked to asparagine 301. Residues cysteine 333, histidine 335, and histidine 362 each coordinate Cu cation.

This sequence belongs to the 7S seed storage protein family. In terms of assembly, homotrimer. Homohexamer. In terms of processing, N-glycosylated at Asn-301 mostly with xylosylated paucimannosidic-type N-glycan MMX (an N-linked glycan with beta-1,2-xylose residue in the structure) and also with MMXF (a complex N-linked glycan with alpha-1,3-fucose and beta-1,2-xylose residues in the structure). Post-translationally, a mixture of proteolytically processed and unprocessed subunits exist. Expressed in seed (at protein level). Expressed in seed.

Functionally, seed storage protein. Does not have superoxide dismutase (SOD) activity. This Corylus avellana (European hazel) protein is Vicilin Cor a 11.0101.